We begin with the raw amino-acid sequence, 120 residues long: NAD(P)H-quinone oxidoreductase subunit 3, chloroplastic (120 aa).

3 helical membrane passes run 9–29, 64–84, and 88–108; these read IFWT…WISG, MFAL…PWAM, and VLGV…VVGL.

It belongs to the complex I subunit 3 family. As to quaternary structure, NDH is composed of at least 16 different subunits, 5 of which are encoded in the nucleus.

It localises to the plastid. The protein localises to the chloroplast thylakoid membrane. It carries out the reaction a plastoquinone + NADH + (n+1) H(+)(in) = a plastoquinol + NAD(+) + n H(+)(out). It catalyses the reaction a plastoquinone + NADPH + (n+1) H(+)(in) = a plastoquinol + NADP(+) + n H(+)(out). NDH shuttles electrons from NAD(P)H:plastoquinone, via FMN and iron-sulfur (Fe-S) centers, to quinones in the photosynthetic chain and possibly in a chloroplast respiratory chain. The immediate electron acceptor for the enzyme in this species is believed to be plastoquinone. Couples the redox reaction to proton translocation, and thus conserves the redox energy in a proton gradient. This chain is NAD(P)H-quinone oxidoreductase subunit 3, chloroplastic, found in Zea mays (Maize).